The sequence spans 346 residues: NADH-ubiquinone oxidoreductase chain 2 (346 aa).

The next 10 helical transmembrane spans lie at 25 to 45 (HWIL…PLIS), 52 to 72 (AIEA…LILF), 95 to 115 (CLIL…HFWF), 124 to 144 (LITA…LLLM), 149 to 169 (LNPA…GWMG), 178 to 196 (ILAF…IIIY), 200 to 219 (LTIL…FLSL), 247 to 267 (TLLS…WLII), 274 to 294 (EMTP…FFYL), and 326 to 346 (AILT…TTLV).

It belongs to the complex I subunit 2 family.

The protein localises to the mitochondrion inner membrane. The catalysed reaction is a ubiquinone + NADH + 5 H(+)(in) = a ubiquinol + NAD(+) + 4 H(+)(out). Core subunit of the mitochondrial membrane respiratory chain NADH dehydrogenase (Complex I) that is believed to belong to the minimal assembly required for catalysis. Complex I functions in the transfer of electrons from NADH to the respiratory chain. The immediate electron acceptor for the enzyme is believed to be ubiquinone. This Coturnix japonica (Japanese quail) protein is NADH-ubiquinone oxidoreductase chain 2 (MT-ND2).